A 118-amino-acid chain; its full sequence is Large ribosomal subunit protein bL20 (118 aa).

Belongs to the bacterial ribosomal protein bL20 family.

Its function is as follows. Binds directly to 23S ribosomal RNA and is necessary for the in vitro assembly process of the 50S ribosomal subunit. It is not involved in the protein synthesizing functions of that subunit. This chain is Large ribosomal subunit protein bL20, found in Thermosipho africanus (strain TCF52B).